A 116-amino-acid chain; its full sequence is MKVLAKTKQAEKSPAPWRAVPCGDTKPIYIYSAYSEEEKERFPYSNGRLIAAVFDLSSYSQKSNASLMAAAPELLEASKAALDFLKGNSIHSKERIIQLLEKAEASAAPKRGGNKT.

The chain is Phage-like element PBSX protein XkdD (xkdD) from Bacillus subtilis (strain 168).